A 202-amino-acid chain; its full sequence is Snake venom metalloproteinase leucurolysin-A (202 aa).

Gln-1 carries the pyrrolidone carboxylic acid modification. The Peptidase M12B domain maps to 6-202 (RYIELVVVAD…HNPQCILNKP (197 aa)). Ca(2+) contacts are provided by Glu-9 and Asp-93. Cystine bridges form between Cys-117–Cys-197, Cys-157–Cys-181, and Cys-159–Cys-164. His-142 is a Zn(2+) binding site. Glu-143 is an active-site residue. Positions 146 and 152 each coordinate Zn(2+). Ca(2+)-binding residues include Cys-197 and Asn-200.

The protein belongs to the venom metalloproteinase (M12B) family. P-I subfamily. Monomer. The cofactor is Zn(2+). As to expression, expressed by the venom gland.

The protein localises to the secreted. Its activity is regulated as follows. Inhibited by EDTA and 2-mercaptoethanol. Inhibited by 1 mM zinc ion and to a lesser extent by 1 mM calcium ion. Non-hemorrhagic metalloproteinase that hydrolyzes the alpha chains of fibrinogen, as well as fibrin, fibronectin and casein. Beta and gamma chains are also hydrolyzed, but more slowly. Thrombolytic activity is also observed. Induces detachment of endothelial cells followed by death, and inhibits endothelial cell adhesion to fibronectin. Induces edema in mouse paw. Inhibits ADP-induced platelet aggregation on human platelet-rich plasma with an IC(50) of 2.8 uM. The chain is Snake venom metalloproteinase leucurolysin-A from Bothrops leucurus (Whitetail lancehead).